The chain runs to 369 residues: MWIKNISLKHYRNYEEAQVDFSPNLNIFIGRNAQGKTNFLEAIYFLALTRSHRTRSDKELVHFKHHDVQITGEVIRKSGHLNLDIQLSEKGRITKVNHLKQAKLSDYIGAMTVVLFAPEDLQLVKGAPSLRRKFLDIDIGQIKPTYLAELSNYNHVLKQRNTYLKTTNNVDKTFLTVLDEQLADYGSRVIEHRFDFIQALNDEADKHHYIISTELEHLSIHYKSSIEFTDKSSIREHFLNQLSKSHSRDIFKKNTSIGPHRDDITFFINDINATFASQGQQRSLILSLKLAEIELIKTVTNDYPILLLDDVMSELDNHRQLKLLEGIKENVQTFITTTSLEHLSALPDQLKIFNVSDGTISINEKKATD.

30–37 contributes to the ATP binding site; that stretch reads GRNAQGKT.

Belongs to the RecF family.

It localises to the cytoplasm. In terms of biological role, the RecF protein is involved in DNA metabolism; it is required for DNA replication and normal SOS inducibility. RecF binds preferentially to single-stranded, linear DNA. It also seems to bind ATP. This is DNA replication and repair protein RecF from Streptococcus agalactiae serotype III (strain NEM316).